The sequence spans 399 residues: uncharacterized protein (399 aa).

Residues 197 to 206 are compositionally biased toward polar residues; the sequence is ENSSASSVTS. The tract at residues 197–224 is disordered; that stretch reads ENSSASSVTSEECEQDVMDEQSAEDNEE. A compositionally biased stretch (acidic residues) spans 207 to 224; that stretch reads EECEQDVMDEQSAEDNEE.

This is an uncharacterized protein from Diadromus pulchellus (Parasitic wasp).